The chain runs to 1071 residues: Exportin-1 (1071 aa).

An Importin N-terminal domain is found at 46–112; it reads AQEVLTHLKE…KKYVVGLIIK (67 aa). HEAT repeat units lie at residues 217–240, 241–277, 354–472, 515–553, 560–597, and 602–639; these read QNAPLVHATLETLLRFLNWIPLGY, IFETKLISTLIYKFLNVPMFRNVSLKCLTEIAGVSVS, MLLV…YVDT, RFLVTVIKDLLGLCEQKRGKDNKAIIASNIMYIVGQYPR, KFLKTVVNKLFEFMHETHDGVQDMACDTFIKIAQKCRR, and VQVGEVMPFIDEILNNINTIICDLQPQQVHTFYEAVGY. Residues 327 to 450 are necessary for interaction with Ran and nuclear export complex formation; it reads CTFLKEHGQL…VREFMKDTDS (124 aa). Serine 391 carries the phosphoserine modification. The tract at residues 411 to 481 is necessary for interaction with RANBP3; the sequence is TVLSKVRLLM…TEIIMTKKLQ (71 aa). Lysine 446 carries the post-translational modification N6-acetyllysine. Threonine 448 carries the phosphothreonine modification. The residue at position 450 (serine 450) is a Phosphoserine. Residue tyrosine 454 is modified to Phosphotyrosine. At lysine 693 the chain carries N6-acetyllysine. HEAT repeat units lie at residues 775–813, 885–916, 917–954, and 1002–1039; these read NFVPPLLDAVLIDYQRNVPAAREPEVLSTMAIIVNKLGG, TMRNVADTGLQILFTLLQNVAQEEAAAQSFYQ, TYFCDILQHIFSVVTDTSHTAGLTMHASILAYMFNLVE, and FSLNQDIPAFKEHLRDFLVQIKEFAGEDTSDLFLEERE. Position 1031 is a phosphoserine (serine 1031).

It belongs to the exportin family. As to quaternary structure, found in a U snRNA export complex with PHAX/RNUXA, NCBP1/CBP80, NCBP2/CBP20, RAN, XPO1 and m7G-capped RNA. Component of a nuclear export receptor complex composed of KPNB1, RAN, SNUPN and XPO1. Found in a trimeric export complex with SNUPN, RAN and XPO1. Found in a nuclear export complex with RANBP3 and RAN. Found in a 60S ribosomal subunit export complex with NMD3, RAN, XPO1. Interacts with DDX3X, NMD3, NUP42, NUP88, NUP214, RANBP3 and TERT. Interacts with NEMF (via its N-terminus). Interacts with the monomeric form of BIRC5/survivin deacetylated at 'Lys-129'. Interacts with SERTAD2; the interaction translocates SERTAD2 out of the nucleus. Interacts with ATF2. Interacts with SLC35G1 and STIM1. Interacts with DCAF8. Interacts with DTNBP1 and the interaction translocates DTNBP1 out of the nucleus. Interacts with CPEB3. Interacts with HAX1. Interacts with BOK; translocates to the cytoplasm. Interacts with HSP90AB1. Interacts with LRPPRC; interacts with LRPPRC alone and also when LRPPRC is in complex with EIF4E and with EIF4E sensitivity element (4ESE)-containing mRNAs to form an EIF4E-dependent mRNA export complex.

The protein resides in the cytoplasm. It localises to the nucleus. The protein localises to the nucleoplasm. It is found in the cajal body. Its subcellular location is the nucleolus. Mediates the nuclear export of cellular proteins (cargos) bearing a leucine-rich nuclear export signal (NES) and of RNAs. In the nucleus, in association with RANBP3, binds cooperatively to the NES on its target protein and to the GTPase Ran in its active GTP-bound form. Docking of this complex to the nuclear pore complex (NPC) is mediated through binding to nucleoporins. Upon transit of a nuclear export complex into the cytoplasm, disassembling of the complex and hydrolysis of Ran-GTP to Ran-GDP (induced by RANBP1 and RANGAP1, respectively) cause release of the cargo from the export receptor. The directionality of nuclear export is thought to be conferred by an asymmetric distribution of the GTP- and GDP-bound forms of Ran between the cytoplasm and nucleus. Involved in U3 snoRNA transport from Cajal bodies to nucleoli. Binds to late precursor U3 snoRNA bearing a TMG cap. This is Exportin-1 (Xpo1) from Mus musculus (Mouse).